The following is a 64-amino-acid chain: Disintegrin schistatin (64 aa).

Residues 1 to 64 (NSVHPCCDPV…PDCPRNRYNV (64 aa)) enclose the Disintegrin domain. 4 disulfides stabilise this stretch: Cys-6–Cys-29, Cys-20–Cys-26, Cys-25–Cys-50, and Cys-38–Cys-57. The Cell attachment site signature appears at 42–44 (RGD).

The protein belongs to the disintegrin family. Dimeric disintegrin subfamily. As to quaternary structure, homodimer; disulfide-linked. As to expression, expressed by the venom gland.

Its subcellular location is the secreted. May bind to both alpha-IIb/beta-3 (ITGA2B/ITGB3) and alpha-V/beta-3 (ITGAV/ITGB3) integrins, and may inhibit platelet aggregation. In Echis carinatus (Saw-scaled viper), this protein is Disintegrin schistatin.